The sequence spans 251 residues: Putative fatty acid elongase DDB_G0274669 (251 aa).

5 helical membrane-spanning segments follow: residues 51-71, 82-102, 135-155, 177-197, and 211-231; these read FQIIPIVLVIYLVTIFSIKFL, FISILHNAILCIWSLIMCVGV, WSYIFYISKFYELLDTVIIVL, YITMIQILQFVCLGIAGVLHV, and AFAAAYSINFSFLFLFSKFFV.

This sequence belongs to the ELO family.

Its subcellular location is the membrane. It carries out the reaction a very-long-chain acyl-CoA + malonyl-CoA + H(+) = a very-long-chain 3-oxoacyl-CoA + CO2 + CoA. Its function is as follows. Could be implicated in synthesis of very long chain fatty acids. This is Putative fatty acid elongase DDB_G0274669 from Dictyostelium discoideum (Social amoeba).